Consider the following 358-residue polypeptide: Alanine racemase (358 aa).

Lys-35 (proton acceptor; specific for D-alanine) is an active-site residue. N6-(pyridoxal phosphate)lysine is present on Lys-35. Arg-130 serves as a coordination point for substrate. Tyr-255 (proton acceptor; specific for L-alanine) is an active-site residue. Residue Met-303 coordinates substrate.

This sequence belongs to the alanine racemase family. Pyridoxal 5'-phosphate is required as a cofactor.

It carries out the reaction L-alanine = D-alanine. It functions in the pathway amino-acid biosynthesis; D-alanine biosynthesis; D-alanine from L-alanine: step 1/1. In terms of biological role, catalyzes the interconversion of L-alanine and D-alanine. May also act on other amino acids. This Shewanella loihica (strain ATCC BAA-1088 / PV-4) protein is Alanine racemase (alr).